The primary structure comprises 393 residues: Purine permease 14 (393 aa).

Ala-2 carries the N-acetylalanine modification. Transmembrane regions (helical) follow at residues 46 to 66 (WPTITISIIFVIIGQSIAKLL), 90 to 110 (TQSLLQTVGFPLLLLPFLIFI), 133 to 153 (LAVIYICIGIIMSVQGRLAAM), 161 to 181 (GVFTLIYTAQLFFTPIFAAFI), 189 to 209 (WVVISVILAIITGALTLSSSF), 225 to 245 (WAALFAGICFALLLCNIQNVF), 268 to 288 (VIIFSSLVATIISVVGLLIAG), 308 to 328 (VMAMVGQAVSWQVYWVGIVGL), 339 to 359 (VISVITWPIVSVLVVIFFNFM), and 363 to 383 (FDAFKGVALVTAVLSAAAYFF).

Belongs to the purine permeases (TC 2.A.7.14) family. As to expression, expressed in seedlings, leaves, embryos, ovules, seeds and the root and shoot meristems. In heart-stage embryos, detected in cells that failed to respond to cytokinins, including the prospective cotyledons.

The protein resides in the cell membrane. Its function is as follows. Purine permease implicated in ATP-dependent cytokinin translocation that controls the spatiotemporal landscape of cytokinin signaling. Depletes ligands from the apoplast, which leads to a suppression of the cytokinin response. This chain is Purine permease 14, found in Arabidopsis thaliana (Mouse-ear cress).